The primary structure comprises 274 residues: NH(3)-dependent NAD(+) synthetase (274 aa).

46 to 53 (GISGGQDS) is a binding site for ATP. Residue D52 coordinates Mg(2+). R140 is a binding site for deamido-NAD(+). T160 is an ATP binding site. E165 provides a ligand contact to Mg(2+). K173 and D180 together coordinate deamido-NAD(+). K189 and T211 together coordinate ATP. Position 260-261 (260-261 (HK)) interacts with deamido-NAD(+).

It belongs to the NAD synthetase family. Homodimer.

The catalysed reaction is deamido-NAD(+) + NH4(+) + ATP = AMP + diphosphate + NAD(+) + H(+). Its pathway is cofactor biosynthesis; NAD(+) biosynthesis; NAD(+) from deamido-NAD(+) (ammonia route): step 1/1. Its function is as follows. Catalyzes the ATP-dependent amidation of deamido-NAD to form NAD. Uses ammonia as a nitrogen source. This Lactococcus lactis subsp. lactis (strain IL1403) (Streptococcus lactis) protein is NH(3)-dependent NAD(+) synthetase.